A 67-amino-acid chain; its full sequence is Theromin (67 aa).

The Antistasin-like domain occupies Cys-2 to Cys-27.

In terms of assembly, homodimer. In terms of processing, eight disulfide bonds are present.

It is found in the secreted. Potent thrombin-specific inhibitor. This Theromyzon tessulatum (Duck leech) protein is Theromin.